The chain runs to 306 residues: MGECMLKTNICGIEFKNPVFLASGIMGETGSALKRIAKGGAGAVTTKSIGLNPNPGHKNPTIVEVYGGFLNAMGLPNPGVDEYLEEIEKVRDELNRMDVRIIGSIYGKDEEEFAEVAKKMERYVDIIELNISCPHAKGYGATIGQNPDLSYDVCKAVKKAVKIPVFAKLTPNVTDIIEIAQAVVDAGVDGLVAINTVRGMAIDIRAKKPILANKFGGLSGKAIKSIGIKVVWDLYENFDVPIIGVGGIMSGEDAIEYMMAGASAVQIGSGVYYRGYDIFKKVCDEIISFLKEENLTLEEIVGMAHE.

Residues Ser23 and 47 to 48 (KS) each bind FMN. Substrate is bound by residues Lys47, 71–75 (NAMGL), and Asn130. Asn130 contributes to the FMN binding site. The active-site Nucleophile is the Cys133. The FMN site is built by Lys168 and Ile194. 195-196 (NT) lines the substrate pocket. FMN-binding positions include Gly220, 246–247 (GG), and 268–269 (GS).

It belongs to the dihydroorotate dehydrogenase family. Type 1 subfamily. Heterotetramer of 2 PyrK and 2 PyrD type B subunits. Requires FMN as cofactor.

It is found in the cytoplasm. It catalyses the reaction (S)-dihydroorotate + NAD(+) = orotate + NADH + H(+). Its pathway is pyrimidine metabolism; UMP biosynthesis via de novo pathway; orotate from (S)-dihydroorotate (NAD(+) route): step 1/1. In terms of biological role, catalyzes the conversion of dihydroorotate to orotate with NAD(+) as electron acceptor. The chain is Dihydroorotate dehydrogenase B (NAD(+)), catalytic subunit (pyrD) from Methanocaldococcus jannaschii (strain ATCC 43067 / DSM 2661 / JAL-1 / JCM 10045 / NBRC 100440) (Methanococcus jannaschii).